A 166-amino-acid polypeptide reads, in one-letter code: 6,7-dimethyl-8-ribityllumazine synthase (166 aa).

5-amino-6-(D-ribitylamino)uracil is bound by residues W31, 63–65 (SFE), and 85–87 (VII). Residue 90 to 91 (GT) participates in (2S)-2-hydroxy-3-oxobutyl phosphate binding. H93 serves as the catalytic Proton donor. F118 is a binding site for 5-amino-6-(D-ribitylamino)uracil. R132 serves as a coordination point for (2S)-2-hydroxy-3-oxobutyl phosphate.

The protein belongs to the DMRL synthase family.

The catalysed reaction is (2S)-2-hydroxy-3-oxobutyl phosphate + 5-amino-6-(D-ribitylamino)uracil = 6,7-dimethyl-8-(1-D-ribityl)lumazine + phosphate + 2 H2O + H(+). It participates in cofactor biosynthesis; riboflavin biosynthesis; riboflavin from 2-hydroxy-3-oxobutyl phosphate and 5-amino-6-(D-ribitylamino)uracil: step 1/2. Catalyzes the formation of 6,7-dimethyl-8-ribityllumazine by condensation of 5-amino-6-(D-ribitylamino)uracil with 3,4-dihydroxy-2-butanone 4-phosphate. This is the penultimate step in the biosynthesis of riboflavin. The protein is 6,7-dimethyl-8-ribityllumazine synthase of Cutibacterium acnes (strain DSM 16379 / KPA171202) (Propionibacterium acnes).